Here is a 135-residue protein sequence, read N- to C-terminus: Protein E6 (135 aa).

Zinc fingers lie at residues 11-47 (CIWCKKGLDKVDAKRCHEKKIRIACRNGKHCAVCTSC) and 83-119 (CMYCGGCLTRDEKERHRLFCEDFWIFRHQVRGRCYLC).

Belongs to the papillomaviridae E6 protein family. In terms of assembly, forms homodimers. Interacts with ubiquitin-protein ligase UBE3A/E6-AP; this interaction stimulates UBE3A ubiquitin activity. Interacts with host BAK1.

Its subcellular location is the host cytoplasm. It localises to the host nucleus. Functionally, plays a major role in the induction and maintenance of cellular transformation. E6 associates with host UBE3A/E6-AP ubiquitin-protein ligase and modulates its activity. Protects host keratinocytes from apoptosis by mediating the degradation of host BAK1. May also inhibit host immune response. This is Protein E6 from Cervus elaphus (Red deer).